Reading from the N-terminus, the 198-residue chain is Peptidyl-tRNA hydrolase (198 aa).

Y16 is a tRNA binding site. H21 acts as the Proton acceptor in catalysis. TRNA is bound by residues Y67, N69, and N115.

This sequence belongs to the PTH family. Monomer.

The protein resides in the cytoplasm. The enzyme catalyses an N-acyl-L-alpha-aminoacyl-tRNA + H2O = an N-acyl-L-amino acid + a tRNA + H(+). In terms of biological role, hydrolyzes ribosome-free peptidyl-tRNAs (with 1 or more amino acids incorporated), which drop off the ribosome during protein synthesis, or as a result of ribosome stalling. Its function is as follows. Catalyzes the release of premature peptidyl moieties from peptidyl-tRNA molecules trapped in stalled 50S ribosomal subunits, and thus maintains levels of free tRNAs and 50S ribosomes. This chain is Peptidyl-tRNA hydrolase, found in Gloeobacter violaceus (strain ATCC 29082 / PCC 7421).